The primary structure comprises 220 residues: Nucleolar protein 12 (220 aa).

A coiled-coil region spans residues 31–86 (HKRKMQRRKTAVEEIKRKIKEEQKKMKEERHKEYMKMLKEREEALCELEENDELEE). The interval 109 to 220 (ISDLDLSGIR…QTGKTRRRRN (112 aa)) is disordered. The span at 139–148 (EKGADEEKPK) shows a compositional bias: basic and acidic residues. Composition is skewed to basic residues over residues 176-186 (RSQRKSGKRPS) and 205-220 (KTQRRKQTGKTRRRRN).

It belongs to the RRP17 family.

The protein localises to the nucleus. Its subcellular location is the nucleolus. Functionally, may bind to rRNA. The protein is Nucleolar protein 12 (nol12) of Xenopus laevis (African clawed frog).